Consider the following 105-residue polypeptide: Met repressor (105 aa).

The protein belongs to the MetJ family. Homodimer.

Its subcellular location is the cytoplasm. In terms of biological role, this regulatory protein, when combined with SAM (S-adenosylmethionine) represses the expression of the methionine regulon and of enzymes involved in SAM synthesis. This Salmonella dublin (strain CT_02021853) protein is Met repressor.